Consider the following 459-residue polypeptide: tRNA modification GTPase MnmE (459 aa).

(6S)-5-formyl-5,6,7,8-tetrahydrofolate contacts are provided by R22, E85, and R124. Residues 221 to 380 (GLSTVIVGKP…LEIQIRDLFF (160 aa)) form the TrmE-type G domain. K(+) is bound at residue N231. Residues 231 to 236 (NVGKSS), 250 to 256 (TEVAGTT), and 275 to 278 (DTAG) each bind GTP. S235 is a Mg(2+) binding site. Residues T250, V252, and T255 each contribute to the K(+) site. Residue T256 coordinates Mg(2+). K459 contacts (6S)-5-formyl-5,6,7,8-tetrahydrofolate.

Belongs to the TRAFAC class TrmE-Era-EngA-EngB-Septin-like GTPase superfamily. TrmE GTPase family. As to quaternary structure, homodimer. Heterotetramer of two MnmE and two MnmG subunits. It depends on K(+) as a cofactor.

It localises to the cytoplasm. In terms of biological role, exhibits a very high intrinsic GTPase hydrolysis rate. Involved in the addition of a carboxymethylaminomethyl (cmnm) group at the wobble position (U34) of certain tRNAs, forming tRNA-cmnm(5)s(2)U34. This Staphylococcus aureus (strain USA300 / TCH1516) protein is tRNA modification GTPase MnmE.